A 90-amino-acid polypeptide reads, in one-letter code: UPF0298 protein SSU05_1549 (90 aa).

This sequence belongs to the UPF0298 family.

It localises to the cytoplasm. The sequence is that of UPF0298 protein SSU05_1549 from Streptococcus suis (strain 05ZYH33).